A 392-amino-acid polypeptide reads, in one-letter code: Formate-dependent phosphoribosylglycinamide formyltransferase (392 aa).

Residues 22–23 (EL) and E82 each bind N(1)-(5-phospho-beta-D-ribosyl)glycinamide. Residues R114, K155, 160 to 165 (SSGKGQ), 195 to 198 (EGLV), and E203 contribute to the ATP site. In terms of domain architecture, ATP-grasp spans 119–308 (RLAAETLSLP…EFALHVRAFL (190 aa)). The Mg(2+) site is built by E267 and E279. N(1)-(5-phospho-beta-D-ribosyl)glycinamide is bound by residues D286, K355, and 362 to 363 (RR).

Belongs to the PurK/PurT family. In terms of assembly, homodimer.

The enzyme catalyses N(1)-(5-phospho-beta-D-ribosyl)glycinamide + formate + ATP = N(2)-formyl-N(1)-(5-phospho-beta-D-ribosyl)glycinamide + ADP + phosphate + H(+). It participates in purine metabolism; IMP biosynthesis via de novo pathway; N(2)-formyl-N(1)-(5-phospho-D-ribosyl)glycinamide from N(1)-(5-phospho-D-ribosyl)glycinamide (formate route): step 1/1. In terms of biological role, involved in the de novo purine biosynthesis. Catalyzes the transfer of formate to 5-phospho-ribosyl-glycinamide (GAR), producing 5-phospho-ribosyl-N-formylglycinamide (FGAR). Formate is provided by PurU via hydrolysis of 10-formyl-tetrahydrofolate. This chain is Formate-dependent phosphoribosylglycinamide formyltransferase, found in Sodalis glossinidius (strain morsitans).